A 352-amino-acid polypeptide reads, in one-letter code: Delta(7)-sterol 5(6)-desaturas erg3A (352 aa).

Asparagine 39 carries an N-linked (GlcNAc...) asparagine glycan. 3 consecutive transmembrane segments (helical) span residues 82 to 102 (FLSFFLIVWIFGIIVYFISAT), 128 to 147 (IAQTMRSMPVMSLLTAPFLV), and 167 to 187 (YYSILQFPLFIAFTDFCIYWI). Residues 174 to 299 (PLFIAFTDFC…FTTLWDRLGG (126 aa)) form the Fatty acid hydroxylase domain. A Histidine box-1 motif is present at residues 188–192 (HRGLH). Residues 201–205 (HKPHH) carry the Histidine box-2 motif. Residues 231–251 (HVFPFIFPLQKLAYVFLFGFI) form a helical membrane-spanning segment. Residues 276 to 280 (HTMHH) carry the Histidine box-3 motif.

This sequence belongs to the sterol desaturase family. Requires Fe cation as cofactor.

The protein localises to the endoplasmic reticulum membrane. Delta(7)-sterol 5(6)-desaturase; part of the third module of ergosterol biosynthesis pathway that includes the late steps of the pathway. Erg3A is a minor delta(7)-sterol 5(6)-desaturase within the ergosterol pathway, erg3B being the major one. The third module or late pathway involves the ergosterol synthesis itself through consecutive reactions that mainly occur in the endoplasmic reticulum (ER) membrane. Firstly, the squalene synthase erg9 catalyzes the condensation of 2 farnesyl pyrophosphate moieties to form squalene, which is the precursor of all steroids. Squalene synthase is crucial for balancing the incorporation of farnesyl diphosphate (FPP) into sterol and nonsterol isoprene synthesis. Secondly, squalene is converted into lanosterol by the consecutive action of the squalene epoxidase erg1 and the lanosterol synthase erg7. Then, the delta(24)-sterol C-methyltransferase erg6 methylates lanosterol at C-24 to produce eburicol. Eburicol is the substrate of the sterol 14-alpha demethylase encoded by cyp51A and cyp51B, to yield 4,4,24-trimethyl ergosta-8,14,24(28)-trienol. The C-14 reductase erg24 then reduces the C14=C15 double bond which leads to 4,4-dimethylfecosterol. A sequence of further demethylations at C-4, involving the C-4 demethylation complex containing the C-4 methylsterol oxidases erg25A or erg25B, the sterol-4-alpha-carboxylate 3-dehydrogenase erg26 and the 3-keto-steroid reductase erg27, leads to the production of fecosterol via 4-methylfecosterol. The C-8 sterol isomerase erg2 then catalyzes the reaction which results in unsaturation at C-7 in the B ring of sterols and thus converts fecosterol to episterol. The sterol-C5-desaturase erg3B then catalyzes the introduction of a C-5 double bond in the B ring to produce 5-dehydroepisterol. The 2 other sterol-C5-desaturases, erg3A and erg3C, seem to be less important in ergosterol biosynthesis. The C-22 sterol desaturase erg5 further converts 5-dehydroepisterol into ergosta-5,7,22,24(28)-tetraen-3beta-ol by forming the C-22(23) double bond in the sterol side chain. Finally, ergosta-5,7,22,24(28)-tetraen-3beta-ol is substrate of the C-24(28) sterol reductases erg4A and erg4B to produce ergosterol. Possible alternative sterol biosynthetic pathways might exist from fecosterol to ergosterol, depending on the activities of the erg3 isoforms. The sequence is that of Delta(7)-sterol 5(6)-desaturas erg3A from Aspergillus fumigatus (strain ATCC MYA-4609 / CBS 101355 / FGSC A1100 / Af293) (Neosartorya fumigata).